A 641-amino-acid polypeptide reads, in one-letter code: SUMO-activating enzyme subunit 2 (641 aa).

ATP-binding positions include 24-29 (GAGGIG), Asp48, 56-59 (NLNR), Lys72, 95-96 (SI), and 117-122 (DNNAAR). Zn(2+) contacts are provided by Cys158 and Cys161. Cys173 functions as the Glycyl thioester intermediate in the catalytic mechanism. Lys190 participates in a covalent cross-link: Glycyl lysine isopeptide (Lys-Gly) (interchain with G-Cter in SUMO). Lys236 is covalently cross-linked (Glycyl lysine isopeptide (Lys-Gly) (interchain with G-Cter in SUMO1)). Residues Lys257 and Lys275 each participate in a glycyl lysine isopeptide (Lys-Gly) (interchain with G-Cter in SUMO) cross-link. Residues Cys439 and Cys442 each coordinate Zn(2+). The disordered stretch occupies residues 546-641 (GDVPEKGPQK…EEDDDIIALD (96 aa)). Positions 556-579 (PSEQSVKNITNGSDDGAQPSTSKA) are enriched in polar residues. Residues 582 to 594 (QDDVLIVDSDEES) are compositionally biased toward acidic residues. Glycyl lysine isopeptide (Lys-Gly) (interchain with G-Cter in SUMO) cross-links involve residues Lys610, Lys612, and Lys623. The span at 630-641 (PVEEDDDIIALD) shows a compositional bias: acidic residues.

The protein belongs to the ubiquitin-activating E1 family. Heterodimer of sae1 and uba2/sae2. The heterodimer corresponds to the two domains that are encoded on a single polypeptide chain in ubiquitin-activating enzyme E1. Interacts with ube2i. Sumoylated with SUMO1 and SUMO2/3 and by UBC9. Sumoylation at Lys-236 inhibits enzymatic activity. Sumoylation at the C-terminal lysine cluster plays an essential role in nuclear trafficking.

Its subcellular location is the cytoplasm. The protein resides in the nucleus. The protein operates within protein modification; protein sumoylation. Its function is as follows. The heterodimer acts as an E1 ligase for sumo1, sumo2, and sumo3. It mediates ATP-dependent activation of sumo proteins followed by formation of a thioester bond between a sumo protein and a conserved active site cysteine residue on uba2/sae2. In Xenopus tropicalis (Western clawed frog), this protein is SUMO-activating enzyme subunit 2 (uba2).